A 784-amino-acid chain; its full sequence is Probable phosphoketolase (784 aa).

This sequence belongs to the XFP family. Requires thiamine diphosphate as cofactor.

In Rhodopseudomonas palustris (strain HaA2), this protein is Probable phosphoketolase.